The chain runs to 514 residues: 5'-AMP-activated protein kinase subunit gamma-3 (514 aa).

2 disordered regions span residues 1–121 and 134–155; these read MELA…FPKA and DNPP…SDSN. Positions 59–71 are enriched in polar residues; that stretch reads SRSWPSRAVTTSS. CBS domains lie at 222-283, 305-363, and 380-440; these read MATS…RSPL, CFKP…GTLL, and TFRD…HLDM. ADP contacts are provided by residues arginine 250, 265–270, valine 310, 331–332, and lysine 350; these read MLTITD and HR. AMP-binding positions include arginine 250, 265-270, valine 310, histidine 331, 331-332, lysine 350, threonine 380, alanine 385, 406-407, 422-425, arginine 449, leucine 457, histidine 478, 478-479, and 494-497; these read MLTITD, HR, SA, SRFD, and SLSD. ATP is bound by residues arginine 250, 265-270, valine 310, 331-332, arginine 332, and lysine 350; these read MLTITD and HR. The short motif at 318 to 339 is the AMPK pseudosubstrate element; that stretch reads LFEAVYALIKNRIHRLPVLDPV. Residues 422–425, arginine 449, leucine 457, and 478–479 contribute to the ADP site; these read SRFD and HR. Residues 422 to 425, arginine 449, leucine 457, and 478 to 479 contribute to the ATP site; these read SRFD and HR. In terms of domain architecture, CBS 4 spans 452-511; that stretch reads CLEGVLSCQPHETLGEVIDRIVREQVHRLVLVDETQHLLGVVSLSDILQALVLSPAGIDA.

It belongs to the 5'-AMP-activated protein kinase gamma subunit family. In terms of assembly, AMPK is a heterotrimer of an alpha catalytic subunit (PRKAA1 or PRKAA2), a beta (PRKAB1 or PRKAB2) and a gamma non-catalytic subunits (PRKAG1, PRKAG2 or PRKAG3). Interacts with FNIP1 and FNIP2. In terms of processing, phosphorylated by ULK1; leading to negatively regulate AMPK activity and suggesting the existence of a regulatory feedback loop between ULK1 and AMPK. Post-translationally, glycosylated; O-GlcNAcylated by OGT, promoting the AMP-activated protein kinase (AMPK) activity. In terms of tissue distribution, muscle.

Functionally, AMP/ATP-binding subunit of AMP-activated protein kinase (AMPK), an energy sensor protein kinase that plays a key role in regulating cellular energy metabolism. In response to reduction of intracellular ATP levels, AMPK activates energy-producing pathways and inhibits energy-consuming processes: inhibits protein, carbohydrate and lipid biosynthesis, as well as cell growth and proliferation. AMPK acts via direct phosphorylation of metabolic enzymes, and by longer-term effects via phosphorylation of transcription regulators. AMPK also acts as a regulator of cellular polarity by remodeling the actin cytoskeleton; probably by indirectly activating myosin. The AMPK gamma3 subunit is a non-catalytic subunit with a regulatory role in muscle energy metabolism. It mediates binding to AMP, ADP and ATP, leading to AMPK activation or inhibition: AMP-binding results in allosteric activation of alpha catalytic subunit (PRKAA1 or PRKAA2) both by inducing phosphorylation and preventing dephosphorylation of catalytic subunits. ADP also stimulates phosphorylation, without stimulating already phosphorylated catalytic subunit. ATP promotes dephosphorylation of catalytic subunit, rendering the AMPK enzyme inactive. The protein is 5'-AMP-activated protein kinase subunit gamma-3 (PRKAG3) of Sus scrofa (Pig).